Reading from the N-terminus, the 967-residue chain is Aminopeptidase N (967 aa).

Residues 2-8 lie on the Cytoplasmic side of the membrane; the sequence is AKGFYIS. A helical; Signal-anchor for type II membrane protein membrane pass occupies residues 9-32; sequence KSLGILGILLGVAAVCTIIALSVV. The segment at 33-68 is cytosolic Ser/Thr-rich junction; the sequence is YSQEKNKNANSSPVASTTPSASATTNPASATTLDQS. Over 33-967 the chain is Extracellular; sequence YSQEKNKNAN…VLQWFTENSK (935 aa). Positions 40–62 are disordered; the sequence is NANSSPVASTTPSASATTNPASA. A compositionally biased stretch (low complexity) spans 41 to 62; sequence ANSSPVASTTPSASATTNPASA. Residues 69-967 form a metalloprotease region; it reads KAWNRYRLPN…VLQWFTENSK (899 aa). Asn128 carries N-linked (GlcNAc...) asparagine glycosylation. A Sulfotyrosine modification is found at Tyr176. Asn234 and Asn265 each carry an N-linked (GlcNAc...) asparagine glycan. Positions 288-295 are necessary and sufficient to mediate interaction with HCoV-229E; the sequence is DYVEKQAS. Asn319 carries N-linked (GlcNAc...) asparagine glycosylation. 352-356 contributes to the substrate binding site; sequence GAMEN. His388 contacts Zn(2+). Catalysis depends on Glu389, which acts as the Proton acceptor. His392 and Glu411 together coordinate Zn(2+). Sulfotyrosine occurs at positions 419 and 424. Asn527, Asn573, Asn625, Asn681, and Asn735 each carry an N-linked (GlcNAc...) asparagine glycan. 2 disulfide bridges follow: Cys761–Cys768 and Cys798–Cys834. Asn818 carries N-linked (GlcNAc...) asparagine glycosylation. Tyr913 is modified (sulfotyrosine).

Belongs to the peptidase M1 family. As to quaternary structure, homodimer. Interacts with SLC6A19. In terms of assembly, (Microbial infection) Interacts with the S1 domain of human coronavirus 229E/HCoV-229E spike protein. The cofactor is Zn(2+). Sulfated. In terms of processing, N- and O-glycosylated. Post-translationally, may undergo proteolysis and give rise to a soluble form. As to expression, expressed in epithelial cells of the kidney, intestine, and respiratory tract; granulocytes, monocytes, fibroblasts, endothelial cells, cerebral pericytes at the blood-brain barrier, synaptic membranes of cells in the CNS. Also expressed in endometrial stromal cells, but not in the endometrial glandular cells. Found in the vasculature of tissues that undergo angiogenesis and in malignant gliomas and lymph node metastases from multiple tumor types but not in blood vessels of normal tissues. A soluble form has been found in plasma. It is found to be elevated in plasma and effusions of cancer patients.

Its subcellular location is the cell membrane. It catalyses the reaction Release of an N-terminal amino acid, Xaa-|-Yaa- from a peptide, amide or arylamide. Xaa is preferably Ala, but may be most amino acids including Pro (slow action). When a terminal hydrophobic residue is followed by a prolyl residue, the two may be released as an intact Xaa-Pro dipeptide.. In terms of biological role, broad specificity aminopeptidase which plays a role in the final digestion of peptides generated from hydrolysis of proteins by gastric and pancreatic proteases. Also involved in the processing of various peptides including peptide hormones, such as angiotensin III and IV, neuropeptides, and chemokines. May also be involved the cleavage of peptides bound to major histocompatibility complex class II molecules of antigen presenting cells. May have a role in angiogenesis and promote cholesterol crystallization. May have a role in amino acid transport by acting as binding partner of amino acid transporter SLC6A19 and regulating its activity. Functionally, (Microbial infection) Acts as a receptor for human coronavirus 229E/HCoV-229E. In case of human coronavirus 229E (HCoV-229E) infection, serves as receptor for HCoV-229E spike glycoprotein. (Microbial infection) Mediates as well Human cytomegalovirus (HCMV) infection. In Homo sapiens (Human), this protein is Aminopeptidase N (ANPEP).